A 222-amino-acid chain; its full sequence is UPF0502 protein XCC4136 (222 aa).

Belongs to the UPF0502 family.

In Xanthomonas campestris pv. campestris (strain ATCC 33913 / DSM 3586 / NCPPB 528 / LMG 568 / P 25), this protein is UPF0502 protein XCC4136.